The sequence spans 392 residues: Bifunctional enzyme Fae/Hps (392 aa).

Positions 1–161 (MFQIGEALMG…EESNKSTHAI (161 aa)) are formaldehyde-activating enzyme. His-17 (proton donor) is an active-site residue. Asp-19, Leu-48, Lys-66, Thr-68, and Gln-83 together coordinate substrate. A 3-hexulose-6-phosphate synthase region spans residues 162 to 392 (MGFKVTRLWD…IDQFRVMTDF (231 aa)).

It in the N-terminal section; belongs to the formaldehyde-activating enzyme family. This sequence in the C-terminal section; belongs to the HPS/KGPDC family. HPS subfamily.

The enzyme catalyses 5,6,7,8-tetrahydromethanopterin + formaldehyde = 5,10-methylenetetrahydromethanopterin + H2O. It catalyses the reaction D-ribulose 5-phosphate + formaldehyde = D-arabino-hex-3-ulose 6-phosphate. It functions in the pathway carbohydrate biosynthesis; D-ribose 5-phosphate biosynthesis. In terms of biological role, catalyzes the condensation of formaldehyde with tetrahydromethanopterin (H(4)MPT) to 5,10-methylenetetrahydromethanopterin. Catalyzes the reversible formation of ribulose-5-phosphate and formaldehyde from 3-hexulose-6-phosphate. In Methanosarcina barkeri (strain Fusaro / DSM 804), this protein is Bifunctional enzyme Fae/Hps.